The primary structure comprises 382 residues: Glucose-1-phosphate adenylyltransferase (382 aa).

Alpha-D-glucose 1-phosphate contacts are provided by residues Tyr100, Gly165, Glu180 to Lys181, and Ser191.

The protein belongs to the bacterial/plant glucose-1-phosphate adenylyltransferase family. In terms of assembly, homotetramer.

The enzyme catalyses alpha-D-glucose 1-phosphate + ATP + H(+) = ADP-alpha-D-glucose + diphosphate. It participates in glycan biosynthesis; glycogen biosynthesis. Functionally, involved in the biosynthesis of ADP-glucose, a building block required for the elongation reactions to produce glycogen. Catalyzes the reaction between ATP and alpha-D-glucose 1-phosphate (G1P) to produce pyrophosphate and ADP-Glc. The polypeptide is Glucose-1-phosphate adenylyltransferase (Clostridium novyi (strain NT)).